The primary structure comprises 100 residues: Carboxysome shell vertex protein CcmL (100 aa).

The BMV domain occupies 1–83 (MQLAKVLGTV…LDAMVVGIID (83 aa)).

Belongs to the CcmL/EutN family. CcmL subfamily. Homopentamer. Interacts with full-length CcmM.

It is found in the carboxysome. Functionally, probably forms vertices in the carboxysome, a polyhedral inclusion where RuBisCO (ribulose bisphosphate carboxylase, rbcL-rbcS) is sequestered. Has been modeled to induce curvature upon insertion into an otherwise flat hexagonal molecular layer of CcmK subunits. This is Carboxysome shell vertex protein CcmL from Synechocystis sp. (strain ATCC 27184 / PCC 6803 / Kazusa).